A 131-amino-acid polypeptide reads, in one-letter code: Large ribosomal subunit protein bL17 (131 aa).

This sequence belongs to the bacterial ribosomal protein bL17 family. As to quaternary structure, part of the 50S ribosomal subunit. Contacts protein L32.

This is Large ribosomal subunit protein bL17 from Thermotoga maritima (strain ATCC 43589 / DSM 3109 / JCM 10099 / NBRC 100826 / MSB8).